A 242-amino-acid chain; its full sequence is Pyridoxine 5'-phosphate synthase (242 aa).

Asn-7 lines the 3-amino-2-oxopropyl phosphate pocket. 1-deoxy-D-xylulose 5-phosphate is bound at residue 9 to 10; the sequence is DH. 3-amino-2-oxopropyl phosphate is bound at residue Arg-18. His-43 (proton acceptor) is an active-site residue. 2 residues coordinate 1-deoxy-D-xylulose 5-phosphate: Arg-45 and His-50. Residue Glu-70 is the Proton acceptor of the active site. Thr-100 provides a ligand contact to 1-deoxy-D-xylulose 5-phosphate. His-191 serves as the catalytic Proton donor. 3-amino-2-oxopropyl phosphate-binding positions include Gly-192 and 213 to 214; that span reads GH.

The protein belongs to the PNP synthase family. In terms of assembly, homooctamer; tetramer of dimers.

It is found in the cytoplasm. It catalyses the reaction 3-amino-2-oxopropyl phosphate + 1-deoxy-D-xylulose 5-phosphate = pyridoxine 5'-phosphate + phosphate + 2 H2O + H(+). It functions in the pathway cofactor biosynthesis; pyridoxine 5'-phosphate biosynthesis; pyridoxine 5'-phosphate from D-erythrose 4-phosphate: step 5/5. Functionally, catalyzes the complicated ring closure reaction between the two acyclic compounds 1-deoxy-D-xylulose-5-phosphate (DXP) and 3-amino-2-oxopropyl phosphate (1-amino-acetone-3-phosphate or AAP) to form pyridoxine 5'-phosphate (PNP) and inorganic phosphate. This chain is Pyridoxine 5'-phosphate synthase, found in Chromobacterium violaceum (strain ATCC 12472 / DSM 30191 / JCM 1249 / CCUG 213 / NBRC 12614 / NCIMB 9131 / NCTC 9757 / MK).